Here is a 558-residue protein sequence, read N- to C-terminus: Dihydroxy-acid dehydratase (558 aa).

A [2Fe-2S] cluster-binding site is contributed by cysteine 48. Mg(2+) is bound at residue aspartate 80. Cysteine 121 provides a ligand contact to [2Fe-2S] cluster. Residues aspartate 122 and lysine 123 each coordinate Mg(2+). An N6-carboxylysine modification is found at lysine 123. Position 193 (cysteine 193) interacts with [2Fe-2S] cluster. A Mg(2+)-binding site is contributed by glutamate 445. The active-site Proton acceptor is serine 471.

It belongs to the IlvD/Edd family. Homodimer. Requires [2Fe-2S] cluster as cofactor. Mg(2+) serves as cofactor.

The enzyme catalyses (2R)-2,3-dihydroxy-3-methylbutanoate = 3-methyl-2-oxobutanoate + H2O. It carries out the reaction (2R,3R)-2,3-dihydroxy-3-methylpentanoate = (S)-3-methyl-2-oxopentanoate + H2O. The protein operates within amino-acid biosynthesis; L-isoleucine biosynthesis; L-isoleucine from 2-oxobutanoate: step 3/4. It functions in the pathway amino-acid biosynthesis; L-valine biosynthesis; L-valine from pyruvate: step 3/4. In terms of biological role, functions in the biosynthesis of branched-chain amino acids. Catalyzes the dehydration of (2R,3R)-2,3-dihydroxy-3-methylpentanoate (2,3-dihydroxy-3-methylvalerate) into 2-oxo-3-methylpentanoate (2-oxo-3-methylvalerate) and of (2R)-2,3-dihydroxy-3-methylbutanoate (2,3-dihydroxyisovalerate) into 2-oxo-3-methylbutanoate (2-oxoisovalerate), the penultimate precursor to L-isoleucine and L-valine, respectively. This chain is Dihydroxy-acid dehydratase, found in Prochlorococcus marinus (strain SARG / CCMP1375 / SS120).